Consider the following 249-residue polypeptide: Aquaporin SIP2-1 (249 aa).

A run of 2 helical transmembrane segments spans residues 12–32 and 53–73; these read PWLV…GALV and VSLS…SGGA. The NPA 1 signature appears at 76–78; sequence NPL. 4 helical membrane-spanning segments follow: residues 104–124, 133–155, 176–196, and 210–230; these read AQVI…PNVG, AHHG…VTLK, IHLL…AFAW, and LVYW…VTFF. The short motif at 189-191 is the NPA 2 element; the sequence is NPA.

The protein belongs to the MIP/aquaporin (TC 1.A.8) family. SIP (TC 1.A.8.10) subfamily.

Its subcellular location is the membrane. Aquaporins facilitate the transport of water and small neutral solutes across cell membranes. The sequence is that of Aquaporin SIP2-1 (SIP2-1) from Zea mays (Maize).